A 153-amino-acid polypeptide reads, in one-letter code: Interleukin-4 (153 aa).

The first 24 residues, 1-24 (MGLTSQLLPPLFFLLACAGNFAHG), serve as a signal peptide directing secretion. 3 disulfides stabilise this stretch: cysteine 27–cysteine 151, cysteine 48–cysteine 89, and cysteine 70–cysteine 123. Asparagine 62 carries an N-linked (GlcNAc...) asparagine glycan.

The protein belongs to the IL-4/IL-13 family.

The protein resides in the secreted. Functionally, participates in at least several B-cell activation processes as well as of other cell types. It is a costimulator of DNA-synthesis. It induces the expression of class II MHC molecules on resting B-cells. It enhances both secretion and cell surface expression of IgE and IgG1. It also regulates the expression of the low affinity Fc receptor for IgE (CD23) on both lymphocytes and monocytes. Positively regulates IL31RA expression in macrophages. Stimulates autophagy in dendritic cells by interfering with mTORC1 signaling and through the induction of RUFY4. This chain is Interleukin-4 (IL4), found in Papio anubis (Olive baboon).